The chain runs to 135 residues: Class I hydrophobin 2 (135 aa).

The signal sequence occupies residues 1–20 (MFARLTSTLFALAAVSAVFA). 4 disulfide bridges follow: Cys-29–Cys-114, Cys-36–Cys-107, Cys-37–Cys-73, and Cys-115–Cys-128. N-linked (GlcNAc...) asparagine glycosylation is found at Asn-117 and Asn-132.

The protein belongs to the fungal hydrophobin family. In terms of assembly, self-assembles to form functional amyloid fibrils called rodlets. Self-assembly into fibrillar rodlets occurs spontaneously at hydrophobic:hydrophilic interfaces and the rodlets further associate laterally to form amphipathic monolayers.

It localises to the secreted. Its subcellular location is the cell wall. In terms of biological role, aerial growth, conidiation, and dispersal of filamentous fungi in the environment rely upon a capability of their secreting small amphipathic proteins called hydrophobins (HPBs) with low sequence identity. Class I can self-assemble into an outermost layer of rodlet bundles on aerial cell surfaces, conferring cellular hydrophobicity that supports fungal growth, development and dispersal; whereas Class II form highly ordered films at water-air interfaces through intermolecular interactions but contribute nothing to the rodlet structure. The protein is Class I hydrophobin 2 of Coprinopsis cinerea (strain Okayama-7 / 130 / ATCC MYA-4618 / FGSC 9003) (Inky cap fungus).